We begin with the raw amino-acid sequence, 119 residues long: Large ribosomal subunit protein bL20 (119 aa).

The protein belongs to the bacterial ribosomal protein bL20 family.

Binds directly to 23S ribosomal RNA and is necessary for the in vitro assembly process of the 50S ribosomal subunit. It is not involved in the protein synthesizing functions of that subunit. The sequence is that of Large ribosomal subunit protein bL20 from Acidovorax ebreus (strain TPSY) (Diaphorobacter sp. (strain TPSY)).